The chain runs to 292 residues: Troponin I (292 aa).

At Ser-1 the chain carries N-acetylserine. The tract at residues 1–149 (SSLEERRAAR…GLGGLSPEKK (149 aa)) is disordered. The span at 46 to 55 (YSAPAEPAYD) shows a compositional bias: low complexity. Residues 58 to 134 (AENRRRQQQE…EARRMAEEQK (77 aa)) are compositionally biased toward basic and acidic residues. The interval 237-250 (DTKGKFVKPVLRKV) is actin-binding. The tract at residues 255-292 (SKLDKIQRKEAKKSDFRDNLKSSREHEADKEGGEGENE) is disordered.

Belongs to the troponin I family.

Its function is as follows. Troponin I is the inhibitory subunit of troponin, the thin filament regulatory complex which confers calcium-sensitivity to striated muscle actomyosin ATPase activity. The sequence is that of Troponin I from Chlamys nipponensis akazara (Akazara scallop).